A 547-amino-acid chain; its full sequence is Auxin transporter-like protein 3 (547 aa).

The Cytoplasmic segment spans residues 1-74 (MASGSSGGGY…DAWFSCASNQ (74 aa)). The chain crosses the membrane as a helical span at residues 75-92 (VAQVLLTLPYSFAQLGMA). Residues 93 to 94 (SG) lie on the Extracellular side of the membrane. The helical transmembrane segment at 95–115 (LLFQLFYGLLGSWTAYLISIL) threads the bilayer. Over 116-151 (YLEYRTRKERDKVDFRNHVIQWFEVLDGLLGRHWRN) the chain is Cytoplasmic. The helical transmembrane segment at 152 to 172 (VGLAFNCTFLLFGSVIQLIGC) threads the bilayer. The Extracellular segment spans residues 173–187 (ASNIYYINDHLDKRT). A helical membrane pass occupies residues 188–208 (WTYIFGACCATTVFIPSFHNY). Topologically, residues 209–211 (RIW) are cytoplasmic. Residues 212–232 (SFLGLLMTTYTAWYIAVASLI) form a helical membrane-spanning segment. Topologically, residues 233-247 (HGQVEGVAHSGPTSI) are extracellular. Residues 248–268 (VLYFTGATNILYTFGGHAVTV) form a helical membrane-spanning segment. Over 269-281 (EIMHAMWRPQKFK) the chain is Cytoplasmic. The helical transmembrane segment at 282–302 (AIYLLATVYVLTLTLPSASAA) threads the bilayer. At 303–329 (YWAFGDALLTHSNALALLPRTPWRDAA) the chain is on the extracellular side. The chain crosses the membrane as a helical span at residues 330-350 (VVLMLIHQFITFGFACTPLYF). Topologically, residues 351–371 (VWEKLVGLHGCPSLCKRAAAR) are cytoplasmic. The chain crosses the membrane as a helical span at residues 372–392 (LPVVLPIWFLAIIFPFFGPIN). A topological domain (extracellular) is located at residue Ser-393. Residues 394-414 (AVGSLLVSFTVYIIPSLAYMV) traverse the membrane as a helical segment. Residues 415–440 (TFRSPQSRQNAVERPPRFAGGWTGAY) are Cytoplasmic-facing. Residues 441 to 461 (VINSFVVAWVLVVGFGFGGWA) traverse the membrane as a helical segment. Residues 462–547 (SITNFVHQVD…HHHRHHRHGL (86 aa)) are Extracellular-facing. N-linked (GlcNAc...) asparagine glycosylation is present at Asn-509.

It belongs to the amino acid/polyamine transporter 2 family. Amino acid/auxin permease (AAAP) (TC 2.A.18.1) subfamily.

It is found in the cell membrane. Carrier protein involved in proton-driven auxin influx. May mediate the formation of auxin gradient from developing leaves (site of auxin biosynthesis) to tips. This chain is Auxin transporter-like protein 3, found in Oryza sativa subsp. japonica (Rice).